We begin with the raw amino-acid sequence, 5255 residues long: SCO-spondin (5255 aa).

The first 18 residues, 1-18 (MGIVATVLLWVVTEAARG), serve as a signal peptide directing secretion. The 93-residue stretch at 19-111 (RWCERTEQVT…ACCAGWSGPH (93 aa)) folds into the EMI domain. Asn97, Asn136, Asn156, and Asn255 each carry an N-linked (GlcNAc...) asparagine glycan. The region spanning 192-358 (ASCTVWAGSR…PDANPELSCS (167 aa)) is the VWFD 1 domain. 2 disulfides stabilise this stretch: Cys194-Cys317 and Cys216-Cys357. Residues 453–508 (CGHGQRYSDCVSSCPASCMAAGTAEEGHCRDDCASGCECTPGLLLDRGACIPQSAC) form the TIL 1 domain. The region spanning 508 to 601 (CPCLHRGHIY…CGGHQPLSCL (94 aa)) is the VWFC 1 domain. One can recognise a VWFD 2 domain in the interval 546–717 (AECAVLGDLH…NKYRVSTDCP (172 aa)). 3 cysteine pairs are disulfide-bonded: Cys548-Cys681, Cys570-Cys716, and Cys592-Cys600. Asn801 is a glycosylation site (N-linked (GlcNAc...) asparagine). A TIL 2 domain is found at 809–868 (CRGGQVYQECSSPCGRTCADLRLDGASSCPSLDNICVSGCNCPEGPVLDDGGQCVPPGVC). The region spanning 868–926 (CPCQHSSQLYPAGSKIRQGCNACMCTAGTWSCTDAPCPDAAFCPGDLVYVFGSCLRTCD) is the VWFC 2 domain. Asn931 and Asn972 each carry an N-linked (GlcNAc...) asparagine glycan. One can recognise a VWFD 3 domain in the interval 998-1168 (GTCVATGDPH…NSWRVSLLCP (171 aa)). Cystine bridges form between Cys1000–Cys1132, Cys1022–Cys1167, and Cys1043–Cys1050. A TIL 3 domain is found at 1263–1319 (CDGGQEYSACGPPCPQTCRNLGLELPEHCDTMSCLEGCFCPEGKVLHEGSCIDPAEC). Asn1340 carries N-linked (GlcNAc...) asparagine glycosylation. LDL-receptor class A domains are found at residues 1362–1398 (HCPDSEFPCRSGGRCVPGAWLCDNEDDCGDGSDEVCA), 1400–1436 (HCAPHQHRCADGQCVPWGARCDGLSDCGDGSDERGCP), 1439–1477 (PCAPPEFRCASGRCIPRAHVCNGELDCGFADDSDEAGCS), 1479–1515 (SCSVGEFQCAAGRCVPYPHRCNGHDDCGDFSDERGCV), 1515–1551 (VCPAGHFQCPDAQCLPPAALCDGMQDCGDGTDEAFCP), and 1555–1593 (TCAPGQLPCPDGSCVSQVKLCDGIWDCRDGWDESSVRCM). Intrachain disulfides connect Cys1363–Cys1376, Cys1370–Cys1389, Cys1383–Cys1397, Cys1401–Cys1413, Cys1408–Cys1426, Cys1420–Cys1435, Cys1440–Cys1452, Cys1447–Cys1465, Cys1459–Cys1476, Cys1480–Cys1492, Cys1487–Cys1505, Cys1499–Cys1514, Cys1516–Cys1528, Cys1523–Cys1541, Cys1535–Cys1550, Cys1556–Cys1568, Cys1563–Cys1581, and Cys1575–Cys1592. Residue Asn1610 is glycosylated (N-linked (GlcNAc...) asparagine). LDL-receptor class A domains follow at residues 1616–1652 (VCGPYEFPCRSGQCVPRGWVCDSEADCPDNSDELGCN), 1654–1693 (SCVLGHFPCALGAHCIHYDHLCDGIPHCPDHSDESDDNCG), and 1699–1734 (PCPGHFVCNNRVCVNATRVCDGALDCPQGEDELACE). Disulfide bonds link Cys1617-Cys1629, Cys1624-Cys1642, and Cys1636-Cys1651. Asn1652 carries N-linked (GlcNAc...) asparagine glycosylation. 6 disulfides stabilise this stretch: Cys1655–Cys1668, Cys1662–Cys1681, Cys1675–Cys1692, Cys1700–Cys1711, Cys1706–Cys1724, and Cys1718–Cys1733. N-linked (GlcNAc...) asparagine glycosylation is present at Asn1713. Residue Asn1743 is glycosylated (N-linked (GlcNAc...) asparagine). Positions 1748-1790 (PCAEYSCRDGDCITFKQVCNGLPDCRDGDMASGWLPSDEWDCG) constitute an LDL-receptor class A 10 domain. 6 disulfides stabilise this stretch: Cys1749–Cys1759, Cys1754–Cys1772, Cys1766–Cys1789, Cys1801–Cys1837, Cys1805–Cys1842, and Cys1816–Cys1827. 2 TSP type-1 domains span residues 1789–1843 (CGQW…TACP) and 1845–1903 (DGAW…DGCP). Asn1856 carries an N-linked (GlcNAc...) asparagine glycan. Cystine bridges form between Cys1857-Cys1897, Cys1861-Cys1902, and Cys1871-Cys1881. In terms of domain architecture, TIL 4 spans 1907–1961 (CPGGLQPRPCAPCPASCADLASRAPCRREQCTPGCWCAEGLVLDGERGCVRPREC). 2 EGF-like domains span residues 1919 to 1956 (CPASCADLASRAPCRREQCTPGCWCAEGLVLDGERGCV) and 1957 to 1983 (RPRECRCEVDGLRYWPGQRMKLNCRLC). Positions 1961 to 2019 (CRCEVDGLRYWPGQRMKLNCRLCTCLDGQPRRCRHNPACSVSCSWSAWSPWGECLGPCG) constitute a VWFC 3 domain. The TSP type-1 3 domain maps to 2002-2058 (SCSWSAWSPWGECLGPCGVQSIQWSFRSPSHPGKHGTNRQCRGIYRKARRCQTEPCQ). Cystine bridges form between Cys2003-Cys2042, Cys2014-Cys2018, and Cys2052-Cys2057. Residues 2058 to 2120 (QECEHQGRSR…GKGDSCCFCA (63 aa)) form the VWFC 4 domain. Residues Asn2125 and Asn2230 are each glycosylated (N-linked (GlcNAc...) asparagine). 4 disulfides stabilise this stretch: Cys2162–Cys2310, Cys2328–Cys2339, Cys2335–Cys2352, and Cys2346–Cys2361. The 149-residue stretch at 2162 to 2310 (CYSPLGIASL…IFLRAELLGC (149 aa)) folds into the F5/8 type C domain. Positions 2327 to 2362 (PCGTGEFWCGVSCVTASRRCDGATDCPGGADEAGCE) constitute an LDL-receptor class A 11 domain. Residues 2352 to 2373 (CPGGADEAGCEPPSSTTLPTHP) form a disordered region. The segment covering 2364–2373 (PSSTTLPTHP) has biased composition (polar residues). LDL-receptor class A domains are found at residues 2481–2517 (LCPPDQFLCDALGCVDAAMVCDGQQDCLDGSDEAHCG) and 2538–2574 (TCSPKQFSCGTGECLALEKRCDLSRDCADGSDESSCA). Disulfide bonds link Cys2482–Cys2494, Cys2489–Cys2507, Cys2501–Cys2516, Cys2539–Cys2551, Cys2546–Cys2564, Cys2558–Cys2573, Cys2576–Cys2612, Cys2587–Cys2591, Cys2622–Cys2627, Cys2642–Cys2679, Cys2646–Cys2684, and Cys2657–Cys2669. TSP type-1 domains follow at residues 2575–2628 (DCIL…RACP) and 2630–2685 (PGAW…QPCG). A TIL 5 domain is found at 2708-2750 (PPCPQVCGDLSATSSCQSPCQEGCRCPPGLFLQEGTCVNASQC). An N-linked (GlcNAc...) asparagine glycan is attached at Asn2746. TSP type-1 domains are found at residues 2790-2844 (ACAW…TPCA), 2849-2903 (SSGW…APCP), and 2905-2958 (AGVW…RPCG). 9 disulfides stabilise this stretch: Cys2791/Cys2829, Cys2802/Cys2806, Cys2839/Cys2843, Cys2861/Cys2897, Cys2865/Cys2902, Cys2881/Cys2887, Cys2917/Cys2952, Cys2921/Cys2957, and Cys2932/Cys2942. The TIL 6 domain occupies 2971 to 3020 (EECRHSEGRCPWICQDLGAGVACTAQCQPGCHCPAGLLLQNGTCVPPSHC). N-linked (GlcNAc...) asparagine glycans are attached at residues Asn3011, Asn3042, and Asn3065. The 58-residue stretch at 3020 to 3077 (CLCHHRGHLYQPGDINALDTCNNCTCVTGQMVCSTETCPVPCTWSNWTAWSTCSHSCD) folds into the VWFC 5 domain. TSP type-1 domains are found at residues 3060–3115 (PCTW…QPCR) and 3117–3158 (VAPW…APCP). Cystine bridges form between Cys3061–Cys3099, Cys3072–Cys3076, and Cys3109–Cys3114. Asn3136 carries N-linked (GlcNAc...) asparagine glycosylation. The 53-residue stretch at 3165–3217 (CPPGKQWQACAQGAASCAELSAAPPADGSCHPGCYCPPGALLLNNECVAEAAC) folds into the TIL 7 domain. The VWFC 6 domain maps to 3217–3275 (CPCAVDGVLYQPGDVVPQGCHNCSCIAGRVTNCSQEDCGDVDGPWTPWTPWSECSASCG). Asn3238 and Asn3248 each carry an N-linked (GlcNAc...) asparagine glycan. Residues 3258 to 3309 (DGPWTPWTPWSECSASCGPGRQRRYRFCSAHPGVPCAEPQPQERPCARQPCH) form the TSP type-1 11 domain. Intrachain disulfides connect Cys3270–Cys3303, Cys3274–Cys3308, and Cys3285–Cys3293. 3 N-linked (GlcNAc...) asparagine glycosylation sites follow: Asn3350, Asn3366, and Asn3392. TSP type-1 domains follow at residues 3410 to 3475 (PGAW…PPCP) and 3477 to 3532 (DGAW…SSCP). 6 cysteine pairs are disulfide-bonded: Cys3422/Cys3468, Cys3426/Cys3474, Cys3437/Cys3449, Cys3489/Cys3524, Cys3492/Cys3531, and Cys3502/Cys3514. A TIL 8 domain is found at 3534–3589 (CAGGLVAFTCGKPCPHSCEDLREDTACMATPRCLPACACPHGQLLQDGDCVPPELC). Residues Asn3598 and Asn3625 are each glycosylated (N-linked (GlcNAc...) asparagine). 2 consecutive TSP type-1 domains span residues 3644–3700 (DGGW…EGCP) and 3702–3751 (EEPW…HVCR). Disulfide bonds link Cys3656–Cys3693, Cys3660–Cys3699, Cys3671–Cys3683, Cys3714–Cys3745, Cys3718–Cys3750, and Cys3729–Cys3735. N-linked (GlcNAc...) asparagine glycans are attached at residues Asn3823 and Asn3869. TSP type-1 domains follow at residues 3878–3934 (DGGF…PECP), 3951–4004 (EEGF…PLCS), 4018–4074 (NCSW…QACK), and 4076–4131 (DGAW…QPCD). Cystine bridges form between Cys3890–Cys3928, Cys3894–Cys3933, Cys3906–Cys3918, Cys3963–Cys3998, Cys3967–Cys4003, and Cys3982–Cys3988. Residues 3932 to 3951 (ECPAVPTTEPGPGVAGAEEE) are disordered. Asn4018 carries an N-linked (GlcNAc...) asparagine glycan. Intrachain disulfides connect Cys4019-Cys4055, Cys4030-Cys4034, Cys4068-Cys4073, Cys4088-Cys4125, Cys4092-Cys4130, and Cys4103-Cys4115. The 56-residue stretch at 4134–4189 (CPPGMALVTCANHCPRHCGDLQEGIVCREEEHCEPGCRCPNGTLEQDGGCVPLAHC) folds into the TIL 9 domain. Asn4174 and Asn4211 each carry an N-linked (GlcNAc...) asparagine glycan. TSP type-1 domains follow at residues 4230 to 4282 (RCPW…GPCP), 4322 to 4384 (GAEH…RPCP), and 4386 to 4433 (ECSW…SGCS). Intrachain disulfides connect Cys4231–Cys4266, Cys4242–Cys4246, and Cys4276–Cys4281. The N-linked (GlcNAc...) asparagine glycan is linked to Asn4362. Cystine bridges form between Cys4387-Cys4417, Cys4398-Cys4400, and Cys4427-Cys4432. Asn4428 carries an N-linked (GlcNAc...) asparagine glycan. Residues 4437–4492 (CEPPFEFQPCSPPCARLCSTLQHPELCPAQSHCLPGCFCPQGLLEQRSACVPPEQC) enclose the TIL 10 domain. N-linked (GlcNAc...) asparagine glycosylation occurs at Asn4498. 2 consecutive TSP type-1 domains span residues 4537-4608 (LPLS…DICQ) and 4610-4662 (LCLW…AVCP). 6 disulfides stabilise this stretch: Cys4548–Cys4601, Cys4551–Cys4607, Cys4575–Cys4591, Cys4611–Cys4646, Cys4622–Cys4626, and Cys4656–Cys4661. One can recognise a TIL 11 domain in the interval 4675-4722 (TTCANSCPRACADLWQHVECVQGGCKPGCRCPQGQLLQDGLCVPTAQC). Asn4730, Asn4747, and Asn4752 each carry an N-linked (GlcNAc...) asparagine glycan. TSP type-1 domains are found at residues 4762 to 4815 (CPSY…QPCP) and 4817 to 4869 (GCQL…HNCT). Intrachain disulfides connect Cys4774-Cys4809, Cys4778-Cys4814, Cys4789-Cys4798, Cys4818-Cys4852, Cys4829-Cys4833, and Cys4863-Cys4868. Residue Asn4867 is glycosylated (N-linked (GlcNAc...) asparagine). The region spanning 4872–4926 (CPRSQVHRECANACPHACADLRPQTQCLPQPCQPGCACPPGQVLQDGACVPPEEC) is the TIL 12 domain. Asn4939 and Asn4970 each carry an N-linked (GlcNAc...) asparagine glycan. The TSP type-1 27 domain maps to 4979 to 5033 (DCLWSPWSPWSPCSVTCGMGERLSHRHPLRQRLYEGAECLGPPVRRAACHLPDCA). 3 disulfide bridges follow: Cys4980-Cys5017, Cys4991-Cys4995, and Cys5027-Cys5032. 3 N-linked (GlcNAc...) asparagine glycosylation sites follow: Asn5081, Asn5122, and Asn5169. Residues 5092-5150 (CECLHQGQLHQPGSEWQEQCARCRCVDGKANCTDGCTPLSCPEGEVKVREPGRCCPVCR) enclose the VWFC 7 domain. Disulfide bonds link Cys5161-Cys5209, Cys5175-Cys5226, Cys5185-Cys5242, and Cys5189-Cys5244. The region spanning 5161–5248 (CRRFTELRNI…IHSCECSSCQ (88 aa)) is the CTCK domain.

The protein belongs to the thrombospondin family.

It localises to the secreted. The protein resides in the extracellular space. In terms of biological role, involved in the modulation of neuronal aggregation. May be involved in developmental events during the formation of the central nervous system. This chain is SCO-spondin (SSPO), found in Gallus gallus (Chicken).